We begin with the raw amino-acid sequence, 351 residues long: Probable dual-specificity RNA methyltransferase RlmN (351 aa).

Catalysis depends on glutamate 92, which acts as the Proton acceptor. A Radical SAM core domain is found at 98-334 (SGDRLTVCVS…VRWSKGLGAD (237 aa)). The cysteines at positions 105 and 337 are disulfide-linked. Positions 112, 116, and 119 each coordinate [4Fe-4S] cluster. S-adenosyl-L-methionine contacts are provided by residues 159-160 (GE), serine 189, 218-220 (SLH), and asparagine 294. The active-site S-methylcysteine intermediate is the cysteine 337.

Belongs to the radical SAM superfamily. RlmN family. [4Fe-4S] cluster is required as a cofactor.

Its subcellular location is the cytoplasm. It carries out the reaction adenosine(2503) in 23S rRNA + 2 reduced [2Fe-2S]-[ferredoxin] + 2 S-adenosyl-L-methionine = 2-methyladenosine(2503) in 23S rRNA + 5'-deoxyadenosine + L-methionine + 2 oxidized [2Fe-2S]-[ferredoxin] + S-adenosyl-L-homocysteine. It catalyses the reaction adenosine(37) in tRNA + 2 reduced [2Fe-2S]-[ferredoxin] + 2 S-adenosyl-L-methionine = 2-methyladenosine(37) in tRNA + 5'-deoxyadenosine + L-methionine + 2 oxidized [2Fe-2S]-[ferredoxin] + S-adenosyl-L-homocysteine. In terms of biological role, specifically methylates position 2 of adenine 2503 in 23S rRNA and position 2 of adenine 37 in tRNAs. The polypeptide is Probable dual-specificity RNA methyltransferase RlmN (Synechococcus sp. (strain ATCC 27144 / PCC 6301 / SAUG 1402/1) (Anacystis nidulans)).